The sequence spans 88 residues: Large ribosomal subunit protein bL27 (88 aa).

The segment covering 1 to 13 (MATKKSGGSSSNG) has biased composition (low complexity). Positions 1–24 (MATKKSGGSSSNGRDSRGRRLGVK) are disordered.

It belongs to the bacterial ribosomal protein bL27 family.

The chain is Large ribosomal subunit protein bL27 from Ehrlichia ruminantium (strain Gardel).